Reading from the N-terminus, the 286-residue chain is Lipoyl synthase (286 aa).

Positions 29, 34, 40, 55, 59, 62, and 265 each coordinate [4Fe-4S] cluster. The 214-residue stretch at 41 to 254 (WGSGTATFMI…EKIAYSLGFS (214 aa)) folds into the Radical SAM core domain.

This sequence belongs to the radical SAM superfamily. Lipoyl synthase family. [4Fe-4S] cluster serves as cofactor.

It is found in the cytoplasm. The catalysed reaction is [[Fe-S] cluster scaffold protein carrying a second [4Fe-4S](2+) cluster] + N(6)-octanoyl-L-lysyl-[protein] + 2 oxidized [2Fe-2S]-[ferredoxin] + 2 S-adenosyl-L-methionine + 4 H(+) = [[Fe-S] cluster scaffold protein] + N(6)-[(R)-dihydrolipoyl]-L-lysyl-[protein] + 4 Fe(3+) + 2 hydrogen sulfide + 2 5'-deoxyadenosine + 2 L-methionine + 2 reduced [2Fe-2S]-[ferredoxin]. It participates in protein modification; protein lipoylation via endogenous pathway; protein N(6)-(lipoyl)lysine from octanoyl-[acyl-carrier-protein]: step 2/2. Catalyzes the radical-mediated insertion of two sulfur atoms into the C-6 and C-8 positions of the octanoyl moiety bound to the lipoyl domains of lipoate-dependent enzymes, thereby converting the octanoylated domains into lipoylated derivatives. This is Lipoyl synthase from Sulfolobus acidocaldarius (strain ATCC 33909 / DSM 639 / JCM 8929 / NBRC 15157 / NCIMB 11770).